The following is a 341-amino-acid chain: tRNA N6-adenosine threonylcarbamoyltransferase (341 aa).

Histidine 110 and histidine 114 together coordinate Fe cation. Substrate contacts are provided by residues 133–137, aspartate 166, glycine 179, and asparagine 276; that span reads LVSGG. Aspartate 304 provides a ligand contact to Fe cation.

The protein belongs to the KAE1 / TsaD family. Requires Fe(2+) as cofactor.

The protein resides in the cytoplasm. It catalyses the reaction L-threonylcarbamoyladenylate + adenosine(37) in tRNA = N(6)-L-threonylcarbamoyladenosine(37) in tRNA + AMP + H(+). Functionally, required for the formation of a threonylcarbamoyl group on adenosine at position 37 (t(6)A37) in tRNAs that read codons beginning with adenine. Is involved in the transfer of the threonylcarbamoyl moiety of threonylcarbamoyl-AMP (TC-AMP) to the N6 group of A37, together with TsaE and TsaB. TsaD likely plays a direct catalytic role in this reaction. The protein is tRNA N6-adenosine threonylcarbamoyltransferase of Saccharophagus degradans (strain 2-40 / ATCC 43961 / DSM 17024).